The chain runs to 270 residues: Glutamate racemase (270 aa).

Substrate is bound by residues aspartate 7–serine 8 and tyrosine 39–glycine 40. The active-site Proton donor/acceptor is cysteine 70. Asparagine 71 to threonine 72 provides a ligand contact to substrate. Cysteine 194 acts as the Proton donor/acceptor in catalysis. Residue threonine 195–histidine 196 participates in substrate binding.

The protein belongs to the aspartate/glutamate racemases family.

The enzyme catalyses L-glutamate = D-glutamate. It participates in cell wall biogenesis; peptidoglycan biosynthesis. Functionally, provides the (R)-glutamate required for cell wall biosynthesis. This Paracoccus denitrificans (strain Pd 1222) protein is Glutamate racemase.